Here is a 652-residue protein sequence, read N- to C-terminus: Starch synthase 1, chloroplastic/amyloplastic (652 aa).

A chloroplast-targeting transit peptide spans 1 to 49 (MASLQISGSVKFEPFVGFNRIRHFRPIASLGFPRFRRRFSIGRSLLLRR). Residue Lys-156 coordinates ADP-alpha-D-glucose.

The protein belongs to the glycosyltransferase 1 family. Bacterial/plant glycogen synthase subfamily. In terms of tissue distribution, expressed in roots, leaves, stems, buds and flowers.

Its subcellular location is the plastid. It localises to the chloroplast. It is found in the amyloplast. The catalysed reaction is [(1-&gt;4)-alpha-D-glucosyl](n) + ADP-alpha-D-glucose = [(1-&gt;4)-alpha-D-glucosyl](n+1) + ADP + H(+). The protein operates within glycan biosynthesis; starch biosynthesis. Involved in the synthesis of short glycan chains within amylopectin in leaves. Is required to generate chains up to about a degree of polymerization of 10 (DP10). The protein is Starch synthase 1, chloroplastic/amyloplastic (SS1) of Arabidopsis thaliana (Mouse-ear cress).